Here is a 50-residue protein sequence, read N- to C-terminus: Large ribosomal subunit protein bL32c (50 aa).

It belongs to the bacterial ribosomal protein bL32 family.

Its subcellular location is the plastid. The sequence is that of Large ribosomal subunit protein bL32c (rpl32) from Euglena longa (Euglenophycean alga).